The chain runs to 319 residues: Olfactory receptor 51F1 (319 aa).

At 1-37 the chain is on the extracellular side; the sequence is MLQNQDTMEILSNSTSKFPTFLLTGIPGLESAHVWIS. The helical transmembrane segment at 38–58 threads the bilayer; the sequence is IPFCCFYAIALSGNSVILFVI. The Cytoplasmic segment spans residues 59-75; sequence ITQQSLHEPMYYFLFRL. A helical transmembrane segment spans residues 76-96; sequence SATDLGLTVSSLSTTLGILWF. Over 97–106 the chain is Extracellular; sequence EAREISLYSC. The cysteines at positions 106 and 188 are disulfide-linked. A helical transmembrane segment spans residues 107–127; it reads IVQMFFLHGFTFMESGVLVAT. The Cytoplasmic portion of the chain corresponds to 128–149; that stretch reads AFDRYVAICDPLRYTTILTNSR. Residues 150–170 form a helical membrane-spanning segment; it reads IIQMGLLMITRAIVLILPLLL. The Extracellular segment spans residues 171-211; that stretch reads LLKPLYFCRMNALSHSYCYHPDVIQLACSDIRANSICGLID. Residues 212–232 form a helical membrane-spanning segment; it reads LILTTGIDTPCIVLSYILIIH. Topologically, residues 233–249 are cytoplasmic; sequence SVLRIASPEEWHKVFST. A helical membrane pass occupies residues 250-270; it reads CVSHVGAVAFFYIHMLSLSLV. Over 271–279 the chain is Extracellular; that stretch reads YRYGRSAPR. The helical transmembrane segment at 280–300 threads the bilayer; sequence VVHSVMANVYLLLPPVLNPII. Over 301–319 the chain is Cytoplasmic; that stretch reads DSVKTKQIRKAMLSLLLTK.

The protein belongs to the G-protein coupled receptor 1 family.

Its subcellular location is the cell membrane. Its function is as follows. Odorant receptor. This chain is Olfactory receptor 51F1 (OR51F1), found in Homo sapiens (Human).